The primary structure comprises 705 residues: Tyrosine decarboxylase (705 aa).

Residues 22–32 are compositionally biased toward polar residues; the sequence is RIRNSLSPSRP. The disordered stretch occupies residues 22 to 81; that stretch reads RIRNSLSPSRPSMSEATATGSSSSSRASTTIPSTPNMDVTPTVEDPRQNDNNASGMTRDE. The segment covering 33 to 55 has biased composition (low complexity); it reads SMSEATATGSSSSSRASTTIPST. The residue at position 380 (lysine 380) is an N6-(pyridoxal phosphate)lysine. Residues 554–620 are a coiled coil; the sequence is VKAVIAEEDE…AQKQHESLAK (67 aa). The segment covering 667–678 has biased composition (polar residues); that stretch reads HSQRPNRLSQSP. Residues 667–687 are disordered; it reads HSQRPNRLSQSPGSAGSAFFD.

It belongs to the group II decarboxylase family. Requires pyridoxal 5'-phosphate as cofactor. As to expression, expressed in the gonadal sheath projections in between the oocytes, in head RIM motor neurons and RIC interneurons.

Its subcellular location is the cytoplasm. The protein resides in the cell projection. The protein localises to the axon. It localises to the perikaryon. It catalyses the reaction L-tyrosine + H(+) = tyramine + CO2. Functionally, required for the decarboxylation of tyrosine to tyramine, a precursor of octopamine but probably also itself a neurotransmitter. Involved in the regulation of egg laying, which is inhibited by tyramine. Also involved in controlling locomotion and head movements. Due to its involvement in octopamine biosynthesis, also required for crtc-1-dependent regulation of AMPK-mediated longevity which requires octopamine signaling. This is Tyrosine decarboxylase from Caenorhabditis elegans.